Consider the following 64-residue polypeptide: Large ribosomal subunit protein bL35 (64 aa).

Residues 1 to 42 (MPKAKTHSGASKRFRRTGTGKIVRQKANRRHLLEHKPTKRTR) are compositionally biased toward basic residues. A disordered region spans residues 1 to 64 (MPKAKTHSGA…NSRINKLLNG (64 aa)). A compositionally biased stretch (polar residues) spans 48–58 (TTVSAADNSRI).

The protein belongs to the bacterial ribosomal protein bL35 family.

The chain is Large ribosomal subunit protein bL35 from Mycolicibacterium smegmatis (strain ATCC 700084 / mc(2)155) (Mycobacterium smegmatis).